A 450-amino-acid chain; its full sequence is 3-phosphoshikimate 1-carboxyvinyltransferase (450 aa).

3-phosphoshikimate contacts are provided by Lys23, Ser24, and Arg28. Residue Lys23 coordinates phosphoenolpyruvate. Residues Gly96 and Arg124 each contribute to the phosphoenolpyruvate site. Ser167, Ser168, Gln169, Ser196, Glu311, and His340 together coordinate 3-phosphoshikimate. Gln169 is a binding site for phosphoenolpyruvate. Residue Glu311 is the Proton acceptor of the active site. Arg344, Arg385, and Lys410 together coordinate phosphoenolpyruvate. Residues 426-450 (GQGWGYPQPRSGQRARRATGQGSGG) are disordered.

This sequence belongs to the EPSP synthase family. In terms of assembly, monomer.

The protein resides in the cytoplasm. It carries out the reaction 3-phosphoshikimate + phosphoenolpyruvate = 5-O-(1-carboxyvinyl)-3-phosphoshikimate + phosphate. It functions in the pathway metabolic intermediate biosynthesis; chorismate biosynthesis; chorismate from D-erythrose 4-phosphate and phosphoenolpyruvate: step 6/7. Its function is as follows. Catalyzes the transfer of the enolpyruvyl moiety of phosphoenolpyruvate (PEP) to the 5-hydroxyl of shikimate-3-phosphate (S3P) to produce enolpyruvyl shikimate-3-phosphate and inorganic phosphate. The protein is 3-phosphoshikimate 1-carboxyvinyltransferase of Mycobacterium bovis (strain ATCC BAA-935 / AF2122/97).